The primary structure comprises 716 residues: Calpain-1 catalytic subunit (716 aa).

One can recognise a Calpain catalytic domain in the interval 55–354; sequence LFRDEAFPPV…FTRLEICNLT (300 aa). 2 residues coordinate Ca(2+): Q109 and D114. Active-site residues include C115, H272, and N296. Residues D318 and E323 each coordinate Ca(2+). T354 is modified (phosphothreonine). The tract at residues 355–528 is domain III; sequence PDALKSQRFR…KSAGTQELDD (174 aa). The linker stretch occupies residues 529 to 544; that stretch reads QVQANLPDEQVLSEEE. 4 consecutive EF-hand domains span residues 543 to 578, 587 to 620, 617 to 652, and 682 to 716; these read EEID…IISK, FSLE…NRIR, NRIR…AGFK, and VRLE…TMFA. Residues 545-715 form a domain IV region; sequence IDENFKSLFR…LFKWLQLTMF (171 aa). Positions 600, 602, 604, 606, 611, 630, 632, 634, 636, and 641 each coordinate Ca(2+).

This sequence belongs to the peptidase C2 family. In terms of assembly, forms a heterodimer with a small (regulatory) subunit CAPNS1. Ca(2+) is required as a cofactor. Post-translationally, undergoes calcium-induced successive autoproteolytic cleavages that generate a membrane-bound 78 kDa active form and an intracellular 75 kDa active form. Calpastatin reduces with high efficiency the transition from 78 kDa to 75 kDa calpain forms.

It localises to the cytoplasm. Its subcellular location is the cell membrane. The enzyme catalyses Broad endopeptidase specificity.. Its activity is regulated as follows. Activated by micromolar concentrations of calcium and inhibited by calpastatin. In terms of biological role, calcium-regulated non-lysosomal thiol-protease which catalyzes limited proteolysis of substrates involved in cytoskeletal remodeling and signal transduction. Proteolytically cleaves CTBP1. Cleaves and activates caspase-7 (CASP7). This chain is Calpain-1 catalytic subunit, found in Bos taurus (Bovine).